A 132-amino-acid polypeptide reads, in one-letter code: Protein FAM174C (132 aa).

A signal peptide spans 1-26 (MGPRVLQPPLLLLLLALLLAALPCGA). Residues 34 to 66 (PAQVTLSPPPAVTNGSQPGAPHNSTHTRPPGAS) form a disordered region. Residues 46–60 (TNGSQPGAPHNSTHT) show a composition bias toward polar residues. An N-linked (GlcNAc...) asparagine glycan is attached at Asn-47. A helical membrane pass occupies residues 73–93 (SFYVILGFCGLTALYFLIRAF). The residue at position 113 (Thr-113) is a Phosphothreonine. Residues 113-132 (TEMASLDSDEETVFESRNLR) form a disordered region. Phosphoserine is present on residues Ser-117 and Ser-120.

Belongs to the FAM174 family.

The protein localises to the membrane. The protein is Protein FAM174C of Homo sapiens (Human).